The primary structure comprises 272 residues: Undecaprenyl-diphosphatase (272 aa).

8 helical membrane-spanning segments follow: residues 5-25, 45-65, 88-108, 115-135, 152-171, 189-209, 221-241, and 251-271; these read YSLF…FLPV, AKTF…VVFW, HLTL…GLAF, LFNP…LLAA, TYRQ…WPGF, YAAS…ASGL, GDLP…LIAI, and ISFV…YWVF.

This sequence belongs to the UppP family.

Its subcellular location is the cell inner membrane. The enzyme catalyses di-trans,octa-cis-undecaprenyl diphosphate + H2O = di-trans,octa-cis-undecaprenyl phosphate + phosphate + H(+). In terms of biological role, catalyzes the dephosphorylation of undecaprenyl diphosphate (UPP). Confers resistance to bacitracin. This is Undecaprenyl-diphosphatase from Yersinia enterocolitica serotype O:8 / biotype 1B (strain NCTC 13174 / 8081).